The sequence spans 471 residues: Trigger factor (471 aa).

Residues 174-261 (GDVAVVSFEG…VKDLKTRELP (88 aa)) form the PPIase FKBP-type domain. Residues 436-446 (ETLPKTKSLNG) are compositionally biased toward polar residues. A disordered region spans residues 436–471 (ETLPKTKSLNGKPSTQGKTSQSKSKKTKTKVEKTTK). Low complexity predominate over residues 447–457 (KPSTQGKTSQS).

It belongs to the FKBP-type PPIase family. Tig subfamily.

The protein localises to the cytoplasm. It carries out the reaction [protein]-peptidylproline (omega=180) = [protein]-peptidylproline (omega=0). In terms of biological role, involved in protein export. Acts as a chaperone by maintaining the newly synthesized protein in an open conformation. Functions as a peptidyl-prolyl cis-trans isomerase. This is Trigger factor from Prochlorococcus marinus (strain MIT 9211).